The sequence spans 132 residues: Translation initiation factor 5A (132 aa).

Lys36 is modified (hypusine).

It belongs to the eIF-5A family.

The protein localises to the cytoplasm. Functions by promoting the formation of the first peptide bond. The protein is Translation initiation factor 5A (eIF5A) of Pyrobaculum neutrophilum (strain DSM 2338 / JCM 9278 / NBRC 100436 / V24Sta) (Thermoproteus neutrophilus).